The primary structure comprises 304 residues: MRVLVAGATGVIGHPLVGALRARGHNVSALVRDASRAPEADRVVVADALDREAVLSAVSAARPEVVVHQLTALRLLRDDPPEAFAQTARLRTEGTAHLVEAARAAGARRLVAQSIAFAAAPQGPPVLDEDAPLYVDAPDPGWAATVRAVAELERLVASSDLAGLVLRYGTLYGPGTGYARDGGTALRVLAGKLPLPEGGAGVTSFLHVDDAVGAAVAAVESEATGCLHVTDDEPAPAAQWLPHYARTLGAPPPRTLPAALAPRLLGWFMTHQLTTARGAANDRARTALGWKPTHPSWRDGLGRE.

This sequence belongs to the NAD(P)-dependent epimerase/dehydratase family.

The catalysed reaction is 3-diazoavenalumate + NADPH + H(+) = avenalumate + N2 + NADP(+). It catalyses the reaction 3-diazoavenalumate + NADH + H(+) = avenalumate + N2 + NAD(+). The enzyme catalyses (E)-3-diazocoumarate + NADPH = N2 + (E)-4-coumarate + NADP(+). It carries out the reaction (E)-3-diazocoumarate + NADH = N2 + (E)-4-coumarate + NAD(+). Functionally, oxidoreductase involved in the biosynthesis of avenalumic acid (AVA). Catalyzes the denitrification of 3-diazoavenalumic acid (3-DAA) to produce AVA. It can also act on 3-diazocoumaric acid (3-DCA). Can use NADPH or NADH as a reductant, with a preference for NADPH. The chain is 3-diazoavenalumate denitrifying reductase from Streptomyces sp.